The following is a 237-amino-acid chain: Undecaprenyl-diphosphatase (237 aa).

7 helical membrane-spanning segments follow: residues 38-58 (QTAV…FDGI), 65-85 (WRII…GVLF), 92-112 (LFSS…ILMF), 126-146 (MSFL…FPGI), 166-186 (ALQY…ILGL), 191-211 (VTIL…YVLS), and 217-237 (GKIW…YLVG).

Belongs to the UppP family.

The protein localises to the cell inner membrane. The enzyme catalyses di-trans,octa-cis-undecaprenyl diphosphate + H2O = di-trans,octa-cis-undecaprenyl phosphate + phosphate + H(+). Catalyzes the dephosphorylation of undecaprenyl diphosphate (UPP). Confers resistance to bacitracin. This Thermotoga sp. (strain RQ2) protein is Undecaprenyl-diphosphatase.